The primary structure comprises 159 residues: SsrA-binding protein (159 aa).

Positions 134–159 (KLHDKRETSKERDWNRQKNRLLKERG) are disordered. Residues 137–159 (DKRETSKERDWNRQKNRLLKERG) show a composition bias toward basic and acidic residues.

The protein belongs to the SmpB family.

The protein resides in the cytoplasm. Required for rescue of stalled ribosomes mediated by trans-translation. Binds to transfer-messenger RNA (tmRNA), required for stable association of tmRNA with ribosomes. tmRNA and SmpB together mimic tRNA shape, replacing the anticodon stem-loop with SmpB. tmRNA is encoded by the ssrA gene; the 2 termini fold to resemble tRNA(Ala) and it encodes a 'tag peptide', a short internal open reading frame. During trans-translation Ala-aminoacylated tmRNA acts like a tRNA, entering the A-site of stalled ribosomes, displacing the stalled mRNA. The ribosome then switches to translate the ORF on the tmRNA; the nascent peptide is terminated with the 'tag peptide' encoded by the tmRNA and targeted for degradation. The ribosome is freed to recommence translation, which seems to be the essential function of trans-translation. The protein is SsrA-binding protein of Sinorhizobium fredii (strain NBRC 101917 / NGR234).